The following is a 466-amino-acid chain: Transcription factor SOX-10 (466 aa).

Disordered regions lie at residues Met-1 to Lys-67, Leu-160 to Gly-198, Asp-213 to Asn-275, Gln-355 to Thr-375, and Arg-433 to Pro-466. Over residues Leu-23–Gly-32 the composition is skewed to low complexity. Ser-24 carries the phosphoserine modification. Residues Glu-62–Pro-102 are dimerization (DIM). A DNA-binding region (HMG box) is located at residues Val-104–Lys-172. Composition is skewed to basic and acidic residues over residues Leu-160–Tyr-173 and Ala-254–Ile-271. Residues Pro-228 to Val-310 are transactivation domain (TAM). Residues Lys-353–Pro-466 form a transactivation domain (TAC) region. A compositionally biased stretch (polar residues) spans Ser-440–Pro-466.

In terms of assembly, monomer. Interacts with Armcx3 at the mitochondrial outer membrane surface. Interacts with PAX3. Predominant expression in glial cells of the nervous system.

It localises to the cytoplasm. The protein resides in the nucleus. It is found in the mitochondrion outer membrane. Its function is as follows. Transcription factor that plays a central role in developing and mature glia. Specifically activates expression of myelin genes, during oligodendrocyte (OL) maturation, such as DUSP15 and MYRF, thereby playing a central role in oligodendrocyte maturation and CNS myelination. Once induced, MYRF cooperates with SOX10 to implement the myelination program. Transcriptional activator of MITF, acting synergistically with PAX3. Transcriptional activator of MBP, via binding to the gene promoter. This is Transcription factor SOX-10 (Sox10) from Rattus norvegicus (Rat).